The sequence spans 820 residues: MAITRRSFLKGVATTSAASVIGPSLLASASANAAESTGTWKVTGSHWGAFRAHIYAGKVQEIKPLELDKNPTEMLNGIKGIIYSPSRVRYPMVRLDWLKKHKYSADTRGNNRFIRVTWDEALDLFYRELERVQKEYGPWALHAGQTGWNQTGSFNNCTAHMQRAVGMHGNFITKVGDYSTGAGQTIMPYVLGSTEVYAQGTSWSEILENSDNIILWANDPVKNLQVGWNCETHESFKYLAELKEKVAKGEINVLSVDPVKNKTQRYLENDHLYINPMTDVAFMLAVAHVLYNENLYDKKFIDTYCLGFEEFIQYVQGKTKDKVEKTPEWAAAICGVKADKIREFARMLVSGRTQILMGWCIQRQEHGEQPYWAAAVVAAMVGQIGLPGGGISYGHHYSSIGVPSTGFAGPGGFPRNLDQGMKPKWDNNDFNGYSRTIPVARWIDCLLEPGKEINYNGGKVKLPDFKMMVISGCNPWHHHQDRNRMKKAFRKLQTVVTIEFAWTATCRFSDIVLPACTQWERNDIDVYGSYSNKGLIAMHRLVDPLFQSKPDFQIMSELTQRFGRREEYTRGMSEMEWIESLYNDCKKANEGKFEMPEFNEFWEKSVLDFGEGKPWVRHADFRKDPELNPLGTPSGFIEITSRKIGRYGYEHCQEHPMWFEKSERSHGGPGSDKYPFWLQSCHPDKRLHSQMCESEEFRATYAVQGREPVYINPIDAKAKGIKDGDLVRVFNGRGQLLAGAVLTDSYPRGVIRIEEGAWYGPLNEKEGAICTYGDPNTLTQDIGSSELAQATSANTCIVDFEKFTGKVPPVTSFGGPIEVA.

The tat-type signal signal peptide spans 1-33 (MAITRRSFLKGVATTSAASVIGPSLLASASANA). Serine 179 serves as a coordination point for Mo-bis(molybdopterin guanine dinucleotide).

The protein belongs to the prokaryotic molybdopterin-containing oxidoreductase family. Mo-bis(molybdopterin guanine dinucleotide) is required as a cofactor. Post-translationally, predicted to be exported by the Tat system. The position of the signal peptide cleavage has not been experimentally proven.

The protein resides in the periplasm. The catalysed reaction is trimethylamine + 2 Fe(III)-[cytochrome c] + H2O = trimethylamine N-oxide + 2 Fe(II)-[cytochrome c] + 3 H(+). Functionally, reduces trimethylamine-N-oxide (TMAO) into trimethylamine; an anaerobic reaction coupled to energy-yielding reactions. The sequence is that of Trimethylamine-N-oxide reductase (torA) from Vibrio parahaemolyticus serotype O3:K6 (strain RIMD 2210633).